The primary structure comprises 249 residues: Hydroxyacylglutathione hydrolase (249 aa).

Zn(2+)-binding residues include His53, His55, Asp57, His58, His110, Asp127, and His165.

It belongs to the metallo-beta-lactamase superfamily. Glyoxalase II family. As to quaternary structure, monomer. Zn(2+) is required as a cofactor.

It carries out the reaction an S-(2-hydroxyacyl)glutathione + H2O = a 2-hydroxy carboxylate + glutathione + H(+). It participates in secondary metabolite metabolism; methylglyoxal degradation; (R)-lactate from methylglyoxal: step 2/2. Functionally, thiolesterase that catalyzes the hydrolysis of S-D-lactoyl-glutathione to form glutathione and D-lactic acid. In Buchnera aphidicola subsp. Baizongia pistaciae (strain Bp), this protein is Hydroxyacylglutathione hydrolase.